The following is a 385-amino-acid chain: MKDSFLFTSESVTEGHPDKMADQISDAVLDYIIERDQKAKVACETLVSNGFCMITGELKTSVYAPMQEIAREVVKKIGYTDALYGFDYRSAAVLNGIGEQSPDINQGVDREDGEIGAGDQGLMFGYACKETETLMPLPIHLAHQLAFALAQKRKDNTLPFLRPDGKSQVSVHYENNKPVSIDTIVISTQHSPEVSQKHLKEAVIEEIVYKVLPKEYLHDNIKFFVNPTGKFVIGGPQGDAGLTGRKIIVDTYGGSCPHGGGAFSGKDPSKVDRSAAYAARYVAKNLVASGVCDKATVQLAYAIGVIEPVSIYVNTHNTSKYSSVELEKCVKAVFKLTPKGIIESLDLLRPIYSLTSAYGHFGRELEEFTWEKTNKDEEIKAFFKR.

Residue H16 participates in ATP binding. D18 contributes to the Mg(2+) binding site. E44 contacts K(+). E57 and Q100 together coordinate L-methionine. The flexible loop stretch occupies residues Q100–R110. Residues D164–K166, K230–F231, D239, R245–K246, A262, and K266 each bind ATP. An L-methionine-binding site is contributed by D239. Residue K270 participates in L-methionine binding.

The protein belongs to the AdoMet synthase family. Homotetramer; dimer of dimers. Mg(2+) serves as cofactor. The cofactor is K(+).

The protein localises to the cytoplasm. It carries out the reaction L-methionine + ATP + H2O = S-adenosyl-L-methionine + phosphate + diphosphate. Its pathway is amino-acid biosynthesis; S-adenosyl-L-methionine biosynthesis; S-adenosyl-L-methionine from L-methionine: step 1/1. Functionally, catalyzes the formation of S-adenosylmethionine (AdoMet) from methionine and ATP. The overall synthetic reaction is composed of two sequential steps, AdoMet formation and the subsequent tripolyphosphate hydrolysis which occurs prior to release of AdoMet from the enzyme. In Helicobacter pylori (strain HPAG1), this protein is S-adenosylmethionine synthase.